A 373-amino-acid chain; its full sequence is UDP-N-acetylenolpyruvoylglucosamine reductase (373 aa).

Residues 30-203 (LACMADSVVT…SRVGFRLHTD (174 aa)) enclose the FAD-binding PCMH-type domain. Residue Arg-180 is part of the active site. Catalysis depends on Ser-258, which acts as the Proton donor. Residue Glu-356 is part of the active site.

The protein belongs to the MurB family. FAD is required as a cofactor.

It is found in the cytoplasm. The catalysed reaction is UDP-N-acetyl-alpha-D-muramate + NADP(+) = UDP-N-acetyl-3-O-(1-carboxyvinyl)-alpha-D-glucosamine + NADPH + H(+). It functions in the pathway cell wall biogenesis; peptidoglycan biosynthesis. Functionally, cell wall formation. The polypeptide is UDP-N-acetylenolpyruvoylglucosamine reductase (Psychrobacter cryohalolentis (strain ATCC BAA-1226 / DSM 17306 / VKM B-2378 / K5)).